The sequence spans 690 residues: Serotransferrin-1 (690 aa).

An N-terminal signal peptide occupies residues 1 to 18 (MKLLLLSALLGCLATAYA). Transferrin-like domains are found at residues 25 to 329 (VKWC…SLKK) and 340 to 669 (IKWC…SLRK). A disulfide bridge links Cys28 with Cys50. Fe(3+) is bound by residues Asp74 and Tyr104. 3 disulfides stabilise this stretch: Cys127–Cys207, Cys172–Cys186, and Cys235–Cys249. Hydrogencarbonate-binding residues include Thr129, Ser134, Gly136, and Trp137. Residue Asn169 is glycosylated (N-linked (GlcNAc...) asparagine). Tyr201 is a Fe(3+) binding site. Fe(3+) is bound at residue His257. Cystine bridges form between Cys343–Cys379 and Cys353–Cys370. Asp394 and Tyr428 together coordinate Fe(3+). 7 disulfides stabilise this stretch: Cys404–Cys681, Cys419–Cys642, Cys451–Cys529, Cys475–Cys670, Cys485–Cys499, Cys496–Cys512, and Cys569–Cys583. Positions 453, 457, 459, and 460 each coordinate hydrogencarbonate. Tyr523 contacts Fe(3+). His591 serves as a coordination point for Fe(3+).

It belongs to the transferrin family. In terms of assembly, monomer. In terms of tissue distribution, abundant in liver and serum with smaller amounts found in the stomach and kidney.

The protein resides in the secreted. Its function is as follows. Transferrins are iron binding transport proteins which can bind two Fe(3+) ions in association with the binding of an anion, usually bicarbonate. It is responsible for the transport of iron from sites of absorption and heme degradation to those of storage and utilization. Serum transferrin may also have a further role in stimulating cell proliferation. The protein is Serotransferrin-1 (tf1) of Salmo salar (Atlantic salmon).